The following is a 165-amino-acid chain: PARP-type zinc finger-containing protein C13F5.07c (165 aa).

Residues 8-100 (YRIEIAPNNR…KVVDAINEGH (93 aa)) form a PARP-type; degenerate zinc finger. Basic and acidic residues predominate over residues 100 to 114 (HVSESDERESRKLGE). Residues 100-165 (HVSESDERES…TDGSEAYEDD (66 aa)) form a disordered region. The segment covering 117-128 (NVNSQKLKTSSP) has biased composition (polar residues). The segment covering 131 to 141 (VVRKNKRHHTT) has biased composition (basic residues). Residues 149-165 (SDLDAEFTDGSEAYEDD) show a composition bias toward acidic residues.

It is found in the cytoplasm. Its subcellular location is the nucleus. This Schizosaccharomyces pombe (strain 972 / ATCC 24843) (Fission yeast) protein is PARP-type zinc finger-containing protein C13F5.07c.